Here is a 175-residue protein sequence, read N- to C-terminus: Coagulogen (175 aa).

Intrachain disulfides connect cysteine 8–cysteine 167, cysteine 10–cysteine 95, cysteine 60–cysteine 161, cysteine 65–cysteine 121, cysteine 75–cysteine 168, cysteine 88–cysteine 140, cysteine 127–cysteine 170, and cysteine 134–cysteine 172.

The protein belongs to the coagulin family. In terms of assembly, coagulogen is cleaved after Arg-18 and Arg-46 by a clotting enzyme contained in the hemocyte and activated by a bacterial endotoxin (lipopolysaccharide). This cleavage releases the peptide C and leaves 2 chains of coagulin, A and B, linked by two disulfide bonds. Coagulin molecules interlink to form a gel. Hemolymph.

The protein resides in the secreted. Coagulogen is a gel-forming protein of hemolymph; it hinders the spread of invaders by immobilizing them. This Carcinoscorpius rotundicauda (Mangrove horseshoe crab) protein is Coagulogen.